A 225-amino-acid chain; its full sequence is Triosephosphate isomerase (225 aa).

9-11 (NMK) is a substrate binding site. His-93 functions as the Electrophile in the catalytic mechanism. The active-site Proton acceptor is Glu-141. Substrate-binding positions include Ile-146, Gly-181, and 202–203 (AS).

Belongs to the triosephosphate isomerase family. Homotetramer; dimer of dimers.

The protein resides in the cytoplasm. It carries out the reaction D-glyceraldehyde 3-phosphate = dihydroxyacetone phosphate. The protein operates within carbohydrate biosynthesis; gluconeogenesis. Its pathway is carbohydrate degradation; glycolysis; D-glyceraldehyde 3-phosphate from glycerone phosphate: step 1/1. In terms of biological role, involved in the gluconeogenesis. Catalyzes stereospecifically the conversion of dihydroxyacetone phosphate (DHAP) to D-glyceraldehyde-3-phosphate (G3P). This Caldivirga maquilingensis (strain ATCC 700844 / DSM 13496 / JCM 10307 / IC-167) protein is Triosephosphate isomerase.